An 89-amino-acid polypeptide reads, in one-letter code: Small ribosomal subunit protein uS14 (89 aa).

It belongs to the universal ribosomal protein uS14 family. In terms of assembly, part of the 30S ribosomal subunit. Contacts proteins S3 and S10.

In terms of biological role, binds 16S rRNA, required for the assembly of 30S particles and may also be responsible for determining the conformation of the 16S rRNA at the A site. The protein is Small ribosomal subunit protein uS14 of Aster yellows witches'-broom phytoplasma (strain AYWB).